We begin with the raw amino-acid sequence, 187 residues long: Adenine phosphoribosyltransferase (187 aa).

133–137 lines the AMP pocket; that stretch reads ATGGS.

It belongs to the purine/pyrimidine phosphoribosyltransferase family. In terms of assembly, homodimer. It depends on Mg(2+) as a cofactor.

It is found in the cytoplasm. Its subcellular location is the nucleus. It catalyses the reaction AMP + diphosphate = 5-phospho-alpha-D-ribose 1-diphosphate + adenine. It functions in the pathway purine metabolism; AMP biosynthesis via salvage pathway; AMP from adenine: step 1/1. In terms of biological role, catalyzes a salvage reaction resulting in the formation of AMP, that is energically less costly than de novo synthesis. The sequence is that of Adenine phosphoribosyltransferase (APT1) from Eremothecium gossypii (strain ATCC 10895 / CBS 109.51 / FGSC 9923 / NRRL Y-1056) (Yeast).